The primary structure comprises 182 residues: Putative manganese efflux pump MntP 2 (182 aa).

6 helical membrane-spanning segments follow: residues 2–22 (IELT…SIAL), 37–57 (AGGF…YLGV), 63–83 (IGGI…LKMI), 104–123 (LLLL…LTLT), 127–149 (LPLW…GGVH), and 162–182 (AEYL…IEHS).

Belongs to the MntP (TC 9.B.29) family.

It localises to the cell inner membrane. In terms of biological role, probably functions as a manganese efflux pump. The sequence is that of Putative manganese efflux pump MntP 2 from Wolinella succinogenes (strain ATCC 29543 / DSM 1740 / CCUG 13145 / JCM 31913 / LMG 7466 / NCTC 11488 / FDC 602W) (Vibrio succinogenes).